The chain runs to 183 residues: Translation initiation factor IF-3 (183 aa).

It belongs to the IF-3 family. In terms of assembly, monomer.

The protein resides in the cytoplasm. Its function is as follows. IF-3 binds to the 30S ribosomal subunit and shifts the equilibrium between 70S ribosomes and their 50S and 30S subunits in favor of the free subunits, thus enhancing the availability of 30S subunits on which protein synthesis initiation begins. The polypeptide is Translation initiation factor IF-3 (Yersinia enterocolitica serotype O:8 / biotype 1B (strain NCTC 13174 / 8081)).